The chain runs to 165 residues: Small ribosomal subunit protein bS16 (165 aa).

Positions 84-165 (WTHGNNPEKG…EAPAEEAAEG (82 aa)) are disordered. The segment covering 89 to 130 (NPEKGKPGKKAQERLAERAQREEERKQAEADAKAAAEAEKAA) has biased composition (basic and acidic residues). The segment covering 131–157 (AAEAAAAAAAAPAVEEAPAEEAPAAEA) has biased composition (low complexity).

The protein belongs to the bacterial ribosomal protein bS16 family.

This Caulobacter vibrioides (strain ATCC 19089 / CIP 103742 / CB 15) (Caulobacter crescentus) protein is Small ribosomal subunit protein bS16.